We begin with the raw amino-acid sequence, 213 residues long: Cell division protein SepF 2 (213 aa).

The tract at residues 16-89 (EDDGYDGRGF…ASLAAESSRP (74 aa)) is disordered. Positions 27–39 (PDDDFEPELDPEP) are enriched in acidic residues.

It belongs to the SepF family. Homodimer. Interacts with FtsZ.

The protein localises to the cytoplasm. Cell division protein that is part of the divisome complex and is recruited early to the Z-ring. Probably stimulates Z-ring formation, perhaps through the cross-linking of FtsZ protofilaments. Its function overlaps with FtsA. The polypeptide is Cell division protein SepF 2 (Streptomyces coelicolor (strain ATCC BAA-471 / A3(2) / M145)).